Consider the following 525-residue polypeptide: Tigger transposable element-derived protein 2 (525 aa).

An HTH psq-type domain is found at 1–52; sequence MLGKRKRVVLTIKDKLDIIKKLEEGISFKKLSVVYGIGESTVRDIKKNKERI. 2 consecutive DNA-binding regions (H-T-H motif) follow at residues 28–48 and 100–132; these read FKKL…IKKN and TICA…FKQR. An HTH CENPB-type domain is found at 67-139; the sequence is KRKSMKSSTY…KQRHGIPKAA (73 aa). A DDE-1 domain is found at 168–385; that stretch reads LQPEQIYGAD…VKSSTITKAW (218 aa). The segment at 442-474 is disordered; sequence QVLTDSESAEDQTKAAEQKPSSKSRKTELNPEK.

Belongs to the tigger transposable element derived protein family.

It localises to the nucleus. In Homo sapiens (Human), this protein is Tigger transposable element-derived protein 2 (TIGD2).